The following is a 268-amino-acid chain: Tryptophan synthase alpha chain (268 aa).

Catalysis depends on proton acceptor residues E49 and D60.

Belongs to the TrpA family. In terms of assembly, tetramer of two alpha and two beta chains.

It catalyses the reaction (1S,2R)-1-C-(indol-3-yl)glycerol 3-phosphate + L-serine = D-glyceraldehyde 3-phosphate + L-tryptophan + H2O. It functions in the pathway amino-acid biosynthesis; L-tryptophan biosynthesis; L-tryptophan from chorismate: step 5/5. Functionally, the alpha subunit is responsible for the aldol cleavage of indoleglycerol phosphate to indole and glyceraldehyde 3-phosphate. The chain is Tryptophan synthase alpha chain from Escherichia coli O6:H1 (strain CFT073 / ATCC 700928 / UPEC).